The following is a 364-amino-acid chain: Aminomethyltransferase (364 aa).

Belongs to the GcvT family. In terms of assembly, the glycine cleavage system is composed of four proteins: P, T, L and H.

The enzyme catalyses N(6)-[(R)-S(8)-aminomethyldihydrolipoyl]-L-lysyl-[protein] + (6S)-5,6,7,8-tetrahydrofolate = N(6)-[(R)-dihydrolipoyl]-L-lysyl-[protein] + (6R)-5,10-methylene-5,6,7,8-tetrahydrofolate + NH4(+). The glycine cleavage system catalyzes the degradation of glycine. This is Aminomethyltransferase from Shewanella loihica (strain ATCC BAA-1088 / PV-4).